The primary structure comprises 440 residues: Tyrosine--tRNA ligase (440 aa).

Tyrosine 46 provides a ligand contact to L-tyrosine. Positions 51–60 (PTAASLHIGN) match the 'HIGH' region motif. Tyrosine 181 and glutamine 185 together coordinate L-tyrosine. The short motif at 241-245 (KFGKS) is the 'KMSKS' region element. Position 244 (lysine 244) interacts with ATP. Residues 373–439 (DRVIDAAQAA…GKKALGAVEN (67 aa)) form the S4 RNA-binding domain.

The protein belongs to the class-I aminoacyl-tRNA synthetase family. TyrS type 1 subfamily. Homodimer.

Its subcellular location is the cytoplasm. The catalysed reaction is tRNA(Tyr) + L-tyrosine + ATP = L-tyrosyl-tRNA(Tyr) + AMP + diphosphate + H(+). In terms of biological role, catalyzes the attachment of tyrosine to tRNA(Tyr) in a two-step reaction: tyrosine is first activated by ATP to form Tyr-AMP and then transferred to the acceptor end of tRNA(Tyr). The chain is Tyrosine--tRNA ligase from Bifidobacterium longum subsp. infantis (strain ATCC 15697 / DSM 20088 / JCM 1222 / NCTC 11817 / S12).